The sequence spans 388 residues: Chorismate synthase (388 aa).

Arg39 and Arg45 together coordinate NADP(+). The disordered stretch occupies residues 95-118 (EKNEKSRRVSRPRPGHADLVGGMK). Residues 130-132 (RSS), 251-252 (NA), Gly296, 311-315 (KPIPT), and Arg337 contribute to the FMN site.

This sequence belongs to the chorismate synthase family. As to quaternary structure, homotetramer. FMNH2 serves as cofactor.

The enzyme catalyses 5-O-(1-carboxyvinyl)-3-phosphoshikimate = chorismate + phosphate. It participates in metabolic intermediate biosynthesis; chorismate biosynthesis; chorismate from D-erythrose 4-phosphate and phosphoenolpyruvate: step 7/7. Functionally, catalyzes the anti-1,4-elimination of the C-3 phosphate and the C-6 proR hydrogen from 5-enolpyruvylshikimate-3-phosphate (EPSP) to yield chorismate, which is the branch point compound that serves as the starting substrate for the three terminal pathways of aromatic amino acid biosynthesis. This reaction introduces a second double bond into the aromatic ring system. The polypeptide is Chorismate synthase (Listeria monocytogenes serotype 4b (strain F2365)).